We begin with the raw amino-acid sequence, 156 residues long: Small ribosomal subunit protein uS7 (156 aa).

The protein belongs to the universal ribosomal protein uS7 family. Part of the 30S ribosomal subunit. Contacts proteins S9 and S11.

In terms of biological role, one of the primary rRNA binding proteins, it binds directly to 16S rRNA where it nucleates assembly of the head domain of the 30S subunit. Is located at the subunit interface close to the decoding center, probably blocks exit of the E-site tRNA. This chain is Small ribosomal subunit protein uS7, found in Micrococcus luteus (strain ATCC 4698 / DSM 20030 / JCM 1464 / CCM 169 / CCUG 5858 / IAM 1056 / NBRC 3333 / NCIMB 9278 / NCTC 2665 / VKM Ac-2230) (Micrococcus lysodeikticus).